Consider the following 382-residue polypeptide: Beta-lactamase CMY-1 (382 aa).

The signal sequence occupies residues M1–A23. The active-site Acyl-ester intermediate is S88. 5 residues coordinate a beta-lactam: S88, Q144, Y174, N176, and N363.

Belongs to the class-C beta-lactamase family.

It carries out the reaction a beta-lactam + H2O = a substituted beta-amino acid. Inhibited by the beta-lactamase-blocking agent sulbactam. Its function is as follows. Class C beta-lactamase which confers resistance to penicillins and cephalosporins. Has benzylpenicillin- and cefalotin-hydrolyzing activities. Has weak cefuroxime, cefotaxime, cefoxitin, imipenem and oxacillin-hydrolyzing activities. The chain is Beta-lactamase CMY-1 from Klebsiella pneumoniae.